A 628-amino-acid polypeptide reads, in one-letter code: (-)-beta-pinene synthase 1, chloroplastic (628 aa).

A chloroplast-targeting transit peptide spans 1-51; that stretch reads MDLISVLPSASKSCVCLHKPLSSSTHKLKPFCRTIRILGMPRPRKSVLMVS. Mg(2+) is bound by residues Asp-379, Asp-383, and Asp-531. The DDXXD motif motif lies at 379–383; it reads DDMYD.

It belongs to the terpene synthase family. Tpsd subfamily. Mg(2+) serves as cofactor. The cofactor is Mn(2+).

It localises to the plastid. It is found in the chloroplast. It catalyses the reaction (2E)-geranyl diphosphate = (1S,5S)-beta-pinene + diphosphate. It carries out the reaction (2E)-geranyl diphosphate = (1S,5S)-alpha-pinene + diphosphate. It participates in terpene metabolism; oleoresin biosynthesis. Its pathway is secondary metabolite biosynthesis; terpenoid biosynthesis. Functionally, monoterpene synthase (TPS) involved in the biosynthesis of monoterpene natural products included in conifer oleoresin secretions and volatile emissions; these compounds contribute to biotic and abiotic stress defense against herbivores and pathogens. Catalyzes the conversion of (2E)-geranyl diphosphate (GPP) to (-)-beta-pinene and, to a lower extent, to (-)-alpha-pinene. The protein is (-)-beta-pinene synthase 1, chloroplastic of Pinus banksiana (Jack pine).